Consider the following 570-residue polypeptide: Urease subunit alpha (570 aa).

The 440-residue stretch at 131–570 (GGFDAHIHFI…LPMAQRYFLF (440 aa)) folds into the Urease domain. Ni(2+)-binding residues include His-136, His-138, and Lys-219. The residue at position 219 (Lys-219) is an N6-carboxylysine. Residue His-221 coordinates substrate. Residues His-248 and His-274 each contribute to the Ni(2+) site. The active-site Proton donor is His-322. Asp-362 lines the Ni(2+) pocket.

It belongs to the metallo-dependent hydrolases superfamily. Urease alpha subunit family. Heterotrimer of UreA (gamma), UreB (beta) and UreC (alpha) subunits. Three heterotrimers associate to form the active enzyme. Requires Ni cation as cofactor. Post-translationally, carboxylation allows a single lysine to coordinate two nickel ions.

Its subcellular location is the cytoplasm. The enzyme catalyses urea + 2 H2O + H(+) = hydrogencarbonate + 2 NH4(+). It functions in the pathway nitrogen metabolism; urea degradation; CO(2) and NH(3) from urea (urease route): step 1/1. In Mesorhizobium japonicum (strain LMG 29417 / CECT 9101 / MAFF 303099) (Mesorhizobium loti (strain MAFF 303099)), this protein is Urease subunit alpha.